A 748-amino-acid polypeptide reads, in one-letter code: Basic juvenile hormone-suppressible protein 1 (748 aa).

The signal sequence occupies residues 1 to 17; that stretch reads MRVLVLVASLGLRGSVV.

This sequence belongs to the hemocyanin family. In terms of tissue distribution, fat body, and hemolymph of larvae.

This Trichoplusia ni (Cabbage looper) protein is Basic juvenile hormone-suppressible protein 1 (BJSP-1).